The primary structure comprises 272 residues: tRNA pseudouridine synthase A (272 aa).

The active-site Nucleophile is D51. Y109 contributes to the substrate binding site.

Belongs to the tRNA pseudouridine synthase TruA family. As to quaternary structure, homodimer.

The enzyme catalyses uridine(38/39/40) in tRNA = pseudouridine(38/39/40) in tRNA. Functionally, formation of pseudouridine at positions 38, 39 and 40 in the anticodon stem and loop of transfer RNAs. In Verminephrobacter eiseniae (strain EF01-2), this protein is tRNA pseudouridine synthase A.